We begin with the raw amino-acid sequence, 383 residues long: ATP phosphoribosyltransferase regulatory subunit (383 aa).

The protein belongs to the class-II aminoacyl-tRNA synthetase family. HisZ subfamily. In terms of assembly, heteromultimer composed of HisG and HisZ subunits.

It is found in the cytoplasm. The protein operates within amino-acid biosynthesis; L-histidine biosynthesis; L-histidine from 5-phospho-alpha-D-ribose 1-diphosphate: step 1/9. In terms of biological role, required for the first step of histidine biosynthesis. May allow the feedback regulation of ATP phosphoribosyltransferase activity by histidine. The polypeptide is ATP phosphoribosyltransferase regulatory subunit (Paraburkholderia phymatum (strain DSM 17167 / CIP 108236 / LMG 21445 / STM815) (Burkholderia phymatum)).